Here is a 163-residue protein sequence, read N- to C-terminus: Neurotrophin-3 (163 aa).

Residues 1–3 (IQS) form the signal peptide. Residues 4 to 119 (TSMDQGILTE…ALNRTSRRKR (116 aa)) constitute a propeptide that is removed on maturation. Disordered stretches follow at residues 38–60 (ARTKDGTQTTVKKSEAEADATAS) and 90–131 (LLSE…YSVC). N-linked (GlcNAc...) asparagine glycosylation occurs at Asn112.

This sequence belongs to the NGF-beta family.

It is found in the secreted. Seems to promote the survival of visceral and proprioceptive sensory neurons. This Eunectes notaeus (Yellow anaconda) protein is Neurotrophin-3 (NTF3).